Consider the following 102-residue polypeptide: Protein RnfH (102 aa).

Belongs to the UPF0125 (RnfH) family.

This Pseudomonas entomophila (strain L48) protein is Protein RnfH.